Consider the following 621-residue polypeptide: MLAASTRTRQINITCDNPVDREVFLHYSLIPSLCIILVLSFLQRREHRRQRDDTSYLLGNHFGIIVPLDFVGTFSNRWSYGAAFGATANKVMFLFSEGYQPLTVPQWAQAFVLFIGGMEVGLSYFPFFACLSSEFQLVSSILGFSYSLTWFVVTVLQISQCPHGQFLGRFETLVFYWPSLLCLGFLLGRFLHMFLKALPVHLGLEPQTEEKSMLEAHQAKHVKQLLSKPRPQEGEKSWFQTRVYEWDPCFQFPSRMVGTLLLAFICLYLFIVIEFCVFLHVRDKLDMFEDKLESYLTHMNETGTLTPIILQVKELISVTKGVWVVTILPAALTCVTYLFHILACYRKHMKRLWAGDKHFLPQKFHSPSSAASVVAIARYSGWQIAYILWGYLIIHVVQSLCGVMLMYGLVLPIIHHRGLEMLQGFGLGVLTLSIVVGLIILQVWIAGTFFLQPKLGTSDKQKPLALNNRRAFHNFNYFLFFYNVLLGLGACLSRLLISCLLGTWLIARIDRTIMQSGYEGADMGFGAWIGMLFVDHYHTNPVLVSFCHILITSHKDRKLQKTVKYWCLNQSAGPRFSARARTRWFLLQTLINNPRLVMLRKSKSGHSSGEFTQILLTCSDC.

The Extracellular segment spans residues 1-21 (MLAASTRTRQINITCDNPVDR). N-linked (GlcNAc...) asparagine glycosylation is present at Asn-12. Residues 22–42 (EVFLHYSLIPSLCIILVLSFL) form a helical membrane-spanning segment. At 43–53 (QRREHRRQRDD) the chain is on the cytoplasmic side. Residues 54-74 (TSYLLGNHFGIIVPLDFVGTF) traverse the membrane as a helical segment. Residues 75–110 (SNRWSYGAAFGATANKVMFLFSEGYQPLTVPQWAQA) are Extracellular-facing. The helical transmembrane segment at 111–131 (FVLFIGGMEVGLSYFPFFACL) threads the bilayer. Residues 132–137 (SSEFQL) are Cytoplasmic-facing. The helical transmembrane segment at 138–158 (VSSILGFSYSLTWFVVTVLQI) threads the bilayer. The Extracellular portion of the chain corresponds to 159 to 173 (SQCPHGQFLGRFETL). A helical membrane pass occupies residues 174–194 (VFYWPSLLCLGFLLGRFLHMF). The Cytoplasmic portion of the chain corresponds to 195 to 258 (LKALPVHLGL…CFQFPSRMVG (64 aa)). A helical transmembrane segment spans residues 259-279 (TLLLAFICLYLFIVIEFCVFL). At 280-321 (HVRDKLDMFEDKLESYLTHMNETGTLTPIILQVKELISVTKG) the chain is on the extracellular side. A helical transmembrane segment spans residues 322–342 (VWVVTILPAALTCVTYLFHIL). At 343 to 383 (ACYRKHMKRLWAGDKHFLPQKFHSPSSAASVVAIARYSGWQ) the chain is on the cytoplasmic side. A helical membrane pass occupies residues 384 to 404 (IAYILWGYLIIHVVQSLCGVM). The Extracellular segment spans residues 405-424 (LMYGLVLPIIHHRGLEMLQG). Residues 425 to 445 (FGLGVLTLSIVVGLIILQVWI) form a helical membrane-spanning segment. Residues 446-476 (AGTFFLQPKLGTSDKQKPLALNNRRAFHNFN) lie on the Cytoplasmic side of the membrane. Residues 477–497 (YFLFFYNVLLGLGACLSRLLI) traverse the membrane as a helical segment. Over 498-621 (SCLLGTWLIA…TQILLTCSDC (124 aa)) the chain is Extracellular. Phosphothreonine is present on Thr-612.

Glycosylated. Highly expressed in liver and small intestine. Also expressed in spleen, kidney, colon, stomach, placenta, adipose tissue and isolated adipocytes.

It is found in the cell membrane. Acts as a high-affinity cell-surface receptor for retinol-binding protein RBP4 and mediates RBP4-dependent retinol uptake in the liver. The chain is Stimulated by retinoic acid gene 6 protein-like from Mus musculus (Mouse).